A 231-amino-acid chain; its full sequence is Orotidine 5'-phosphate decarboxylase (231 aa).

Substrate-binding positions include Asp11, Lys33, 60-69 (DLKLHDIPNT), Thr119, Arg181, Gln190, Gly210, and Arg211. Lys62 acts as the Proton donor in catalysis.

The protein belongs to the OMP decarboxylase family. Type 1 subfamily. In terms of assembly, homodimer.

It catalyses the reaction orotidine 5'-phosphate + H(+) = UMP + CO2. It participates in pyrimidine metabolism; UMP biosynthesis via de novo pathway; UMP from orotate: step 2/2. Functionally, catalyzes the decarboxylation of orotidine 5'-monophosphate (OMP) to uridine 5'-monophosphate (UMP). The chain is Orotidine 5'-phosphate decarboxylase from Malacoplasma penetrans (strain HF-2) (Mycoplasma penetrans).